We begin with the raw amino-acid sequence, 355 residues long: DnaJ homolog dnj-20 (355 aa).

The N-terminal stretch at 1–21 (MRILNVSLLVLASSLVAFVEC) is a signal peptide. Positions 24–89 (DFYKILGVAK…EKRAMYDRHG (66 aa)) constitute a J domain.

The protein is DnaJ homolog dnj-20 of Caenorhabditis elegans.